The primary structure comprises 262 residues: Glucosamine-6-phosphate deaminase (262 aa).

Catalysis depends on Asp-63, which acts as the Proton acceptor; for enolization step. Residue Asn-129 is the For ring-opening step of the active site. The active-site Proton acceptor; for ring-opening step is the His-131. Catalysis depends on Glu-136, which acts as the For ring-opening step.

It belongs to the glucosamine/galactosamine-6-phosphate isomerase family. NagB subfamily.

The enzyme catalyses alpha-D-glucosamine 6-phosphate + H2O = beta-D-fructose 6-phosphate + NH4(+). Its pathway is amino-sugar metabolism; N-acetylneuraminate degradation; D-fructose 6-phosphate from N-acetylneuraminate: step 5/5. In terms of biological role, catalyzes the reversible isomerization-deamination of glucosamine 6-phosphate (GlcN6P) to form fructose 6-phosphate (Fru6P) and ammonium ion. The chain is Glucosamine-6-phosphate deaminase from Bacillus cytotoxicus (strain DSM 22905 / CIP 110041 / 391-98 / NVH 391-98).